We begin with the raw amino-acid sequence, 680 residues long: MIDRYKHQQLRIGSVSPQQISAWAKKILPNGEMVGEVTKPYTFHYKTNKPEKDGLFCERIFGPIKSGICACGNYRVIGDKKEDPKFCEQCGVEFVDSRVRRYQMGYIKLACPVTHVWYLKRLPSYIANLLDKPLKELEGLVYCDFLFARPVAKKPTFLRLRGSFEYEIQSWKYSIPLFFTTQGFDTFRNREISTGAGAIREQLADLDLRLITDSSLVEWKELGEEGATGNEWEDRKIGRRKDFLVRRMELAKHFIRTNVEPERMVLCLLPVLPPELRPIIQIDGGKPMSSDINELYRRVIYRNNTLTDLLTTSRSTPGELVMCQEKLVQEAVDTLLDNGIRGQPMRDSHNKVYKSFSDVIEGKEGRFRETLLGKRVDYSGRSVIVVGPSLSLHRCGLPREIAIELFQTFVIRGLIRQHAASNIGVAKSKIREKEPIVWEILQEVMQGHPVLLNRAPTLHRLGIQAFQPILVEGRAIFLHPLVCKGFNADFDGDQMAVHVPLSLEAQAEARLLMFSHMNLLSPAIGDPISVPTQDMLMGLYVLTTGNHRGICANRYNPSNHRNYQNEKIDDNNYKYTKEPYFCSSYDALGAYRQKRIYLDSPLWLRWRLDQRVIASREVPIEVQYESLGTYHEIYGHYLIVRNVKKEILCIDIRTTVGHISFYREIEEAIQGFCRACSYGT.

Positions 69, 71, 87, and 90 each coordinate Zn(2+). Asp-489, Asp-491, and Asp-493 together coordinate Mg(2+).

The protein belongs to the RNA polymerase beta' chain family. RpoC1 subfamily. As to quaternary structure, in plastids the minimal PEP RNA polymerase catalytic core is composed of four subunits: alpha, beta, beta', and beta''. When a (nuclear-encoded) sigma factor is associated with the core the holoenzyme is formed, which can initiate transcription. The cofactor is Mg(2+). Zn(2+) serves as cofactor.

The protein resides in the plastid. Its subcellular location is the chloroplast. It carries out the reaction RNA(n) + a ribonucleoside 5'-triphosphate = RNA(n+1) + diphosphate. In terms of biological role, DNA-dependent RNA polymerase catalyzes the transcription of DNA into RNA using the four ribonucleoside triphosphates as substrates. In Nandina domestica (Heavenly bamboo), this protein is DNA-directed RNA polymerase subunit beta'.